The chain runs to 1266 residues: Neuronal-glial cell adhesion molecule (1266 aa).

Positions Met-1–Ala-20 are cleaved as a signal peptide. Over Ile-21 to Lys-1130 the chain is Extracellular. 6 Ig-like C2-type domains span residues Pro-36–Ala-128, Pro-135–Leu-221, Pro-236–Thr-322, Pro-327–His-413, Pro-418–Glu-506, and Pro-510–Arg-597. Disulfide bonds link Cys-58–Cys-110, Cys-154–Cys-205, Cys-260–Cys-306, and Cys-348–Cys-397. Asn-97 carries N-linked (GlcNAc...) asparagine glycosylation. N-linked (GlcNAc...) asparagine glycans are attached at residues Asn-288, Asn-390, Asn-434, Asn-472, and Asn-498. Cys-441 and Cys-490 form a disulfide bridge. Residues Cys-532 and Cys-581 are joined by a disulfide bond. Fibronectin type-III domains follow at residues Pro-603–Ala-698, Pro-700–Asp-804, Tyr-809–Gly-930, Pro-934–Glu-1021, and Pro-1022–Thr-1118. Residues Glu-685–Glu-710 are disordered. N-linked (GlcNAc...) asparagine glycans are attached at residues Asn-712 and Asn-819. The segment at Ser-857 to Val-882 is disordered. The span at Pro-862 to Pro-881 shows a compositional bias: pro residues. A Cell attachment site motif is present at residues Arg-914–Asp-916. A disordered region spans residues Ser-1004–Pro-1025. 4 N-linked (GlcNAc...) asparagine glycosylation sites follow: Asn-1061, Asn-1075, Asn-1100, and Asn-1116. Residues Gly-1131 to Ile-1153 form a helical membrane-spanning segment. The Cytoplasmic segment spans residues Lys-1154 to Asp-1266. Residues Val-1163 to Lys-1195 are compositionally biased toward basic and acidic residues. The disordered stretch occupies residues Val-1163–Asp-1266. The segment covering Ser-1199 to Gly-1211 has biased composition (gly residues).

The protein belongs to the immunoglobulin superfamily. L1/neurofascin/NgCAM family. Binds to itself and to axonin 1. As to expression, brain.

It is found in the cell membrane. In terms of biological role, mediates the adhesion of neurons to neurons and neurons to glia. It is involved in neuronal migration, neurite fasciculation and outgrowth. The sequence is that of Neuronal-glial cell adhesion molecule from Gallus gallus (Chicken).